The chain runs to 394 residues: HORMA domain-containing protein 1 (394 aa).

The region spanning 24–226 is the HORMA domain; the sequence is HQSLVLVKRL…TPFHIFKVKV (203 aa). The span at 253-282 shows a compositional bias: basic and acidic residues; the sequence is ILRDKDVEDEQEHYTSDDLDIETKMEEQEK. The segment at 253-394 is disordered; it reads ILRDKDVEDE…RKFSEPKEHI (142 aa). The span at 288–300 shows a compositional bias: acidic residues; the sequence is ELEEPSLVCEEDE. Polar residues-rich tracts occupy residues 310 to 324 and 343 to 352; these read LSISHSQVEQLVNKT and KMANGNQPVK. A compositionally biased stretch (basic and acidic residues) spans 362–374; it reads QHESGRIVLHHFD. At serine 376 the chain carries Phosphoserine. The short motif at 383-386 is the Nuclear localization signal element; that stretch reads KRRK.

Interacts with HORMAD2. Interacts with IHO1. In terms of processing, phosphorylated at Ser-377 in a SPO11-dependent manner. As to expression, testis-specific. Over-expressed in carcinomas.

It localises to the nucleus. Its subcellular location is the chromosome. In terms of biological role, plays a key role in meiotic progression. Regulates 3 different functions during meiosis: ensures that sufficient numbers of processed DNA double-strand breaks (DSBs) are available for successful homology search by increasing the steady-state numbers of single-stranded DSB ends. Promotes synaptonemal-complex formation independently of its role in homology search. Plays a key role in the male mid-pachytene checkpoint and the female meiotic prophase checkpoint: required for efficient build-up of ATR activity on unsynapsed chromosome regions, a process believed to form the basis of meiotic silencing of unsynapsed chromatin (MSUC) and meiotic prophase quality control in both sexes. The polypeptide is HORMA domain-containing protein 1 (Homo sapiens (Human)).